The following is a 411-amino-acid chain: Multidrug resistance protein MdtG (411 aa).

Helical transmembrane passes span 17–37 (LFVA…VMPF), 59–79 (LVFS…GGLA), 92–112 (ALGM…WQFL), 116–136 (AVLG…ATQV), 147–167 (WLST…GLLA), 174–194 (PVFF…LFAV), 222–242 (VLTL…IAPI), 257–277 (LAFV…ISAP), 291–311 (ILVA…MVQN), 320–340 (FLLG…LIYN), and 379–399 (AVFV…WITL).

The protein belongs to the major facilitator superfamily. DHA1 family. MdtG (TC 2.A.1.2.20) subfamily.

Its subcellular location is the cell inner membrane. The protein is Multidrug resistance protein MdtG of Erwinia billingiae (strain Eb661).